The primary structure comprises 130 residues: Small ribosomal subunit protein uS9 (130 aa).

It belongs to the universal ribosomal protein uS9 family.

This Lawsonia intracellularis (strain PHE/MN1-00) protein is Small ribosomal subunit protein uS9.